The following is a 74-amino-acid chain: Kappa-scoloptoxin(03)-Ssm1a (74 aa).

The N-terminal stretch at M1 to S23 is a signal peptide. 3 disulfide bridges follow: C32–C59, C42–C58, and C45–C68.

The protein belongs to the scoloptoxin-03 family. As to expression, expressed by the venom gland.

Its subcellular location is the secreted. Functionally, this toxin inhibits voltage-gated potassium channel currents in DRG neurons (IC(50)=44.2 nM). In vivo, insects injected with this toxin showed signs of neurotoxicity including twitching, paralysis, and body contraction. The protein is Kappa-scoloptoxin(03)-Ssm1a of Scolopendra mutilans (Chinese red-headed centipede).